We begin with the raw amino-acid sequence, 354 residues long: Guanine nucleotide-binding protein G(t) subunit alpha-2 (354 aa).

Residues 1–28 (MGSGISAEDKELARRSKELEKKLQEDAD) form a disordered region. A lipid anchor (N-myristoyl glycine) is attached at Gly2. A compositionally biased stretch (basic and acidic residues) spans 7–28 (AEDKELARRSKELEKKLQEDAD). Residues 32–354 (KTVKLLLLGA…KENLKDCGLF (323 aa)) enclose the G-alpha domain. Residues 35-48 (KLLLLGAGESGKST) form a G1 motif region. GTP contacts are provided by residues 40–47 (GAGESGKS), 175–181 (LRSRVKT), 200–204 (DVGGQ), 269–272 (NKKD), and Ala326. Residues Ser47 and Thr181 each contribute to the Mg(2+) site. The G2 motif stretch occupies residues 173–181 (DVLRSRVKT). Residues 196 to 205 (FRMFDVGGQR) are G3 motif. The interval 265 to 272 (VLFLNKKD) is G4 motif. The interval 324-329 (TCATDT) is G5 motif.

Belongs to the G-alpha family. G(i/o/t/z) subfamily. G proteins are composed of 3 units; alpha, beta and gamma. The alpha chain contains the guanine nucleotide binding site. As to expression, in the retina, expressed in the rod photoreceptors.

It localises to the cell projection. The protein resides in the cilium. The protein localises to the photoreceptor outer segment. Its subcellular location is the photoreceptor inner segment. Its function is as follows. Guanine nucleotide-binding proteins (G proteins) are involved as modulators or transducers in various transmembrane signaling systems. Transducin is an amplifier and one of the transducers of a visual impulse that performs the coupling between rhodopsin and cGMP-phosphodiesterase. This chain is Guanine nucleotide-binding protein G(t) subunit alpha-2 (Gnat2), found in Mus musculus (Mouse).